The chain runs to 424 residues: Probable methyltransferase EP424R (424 aa).

In terms of domain architecture, Adrift-type SAM-dependent 2'-O-MTase spans 103 to 315 (QIVTNAWLKM…TYIVGKNRLR (213 aa)). Residues glycine 135 and aspartate 228 each contribute to the S-adenosyl-L-methionine site. Residue lysine 268 is the Proton acceptor of the active site.

It localises to the virion. This is Probable methyltransferase EP424R from Ornithodoros (relapsing fever ticks).